A 185-amino-acid polypeptide reads, in one-letter code: Large ribosomal subunit protein uL22 (185 aa).

Belongs to the universal ribosomal protein uL22 family. In terms of assembly, part of the 50S ribosomal subunit.

In terms of biological role, this protein binds specifically to 23S rRNA. It makes multiple contacts with different domains of the 23S rRNA in the assembled 50S subunit and ribosome. The globular domain of the protein is located near the polypeptide exit tunnel on the outside of the subunit, while an extended beta-hairpin is found that lines the wall of the exit tunnel in the center of the 70S ribosome. This chain is Large ribosomal subunit protein uL22, found in Pyrobaculum neutrophilum (strain DSM 2338 / JCM 9278 / NBRC 100436 / V24Sta) (Thermoproteus neutrophilus).